The following is a 577-amino-acid chain: Sulfite reductase [NADPH] hemoprotein beta-component (577 aa).

Residues Cys440, Cys446, Cys486, and Cys490 each contribute to the [4Fe-4S] cluster site. Position 490 (Cys490) interacts with siroheme.

It belongs to the nitrite and sulfite reductase 4Fe-4S domain family. As to quaternary structure, alpha(8)-beta(8). The alpha component is a flavoprotein, the beta component is a hemoprotein. It depends on siroheme as a cofactor. The cofactor is [4Fe-4S] cluster.

The enzyme catalyses hydrogen sulfide + 3 NADP(+) + 3 H2O = sulfite + 3 NADPH + 4 H(+). It participates in sulfur metabolism; hydrogen sulfide biosynthesis; hydrogen sulfide from sulfite (NADPH route): step 1/1. Functionally, component of the sulfite reductase complex that catalyzes the 6-electron reduction of sulfite to sulfide. This is one of several activities required for the biosynthesis of L-cysteine from sulfate. This Vibrio cholerae serotype O1 (strain ATCC 39541 / Classical Ogawa 395 / O395) protein is Sulfite reductase [NADPH] hemoprotein beta-component.